We begin with the raw amino-acid sequence, 237 residues long: Lectin alpha chain (237 aa).

Glu-8 and Asp-10 together coordinate Mn(2+). Residues Asp-10, Tyr-12, Asn-14, and Asp-19 each contribute to the Ca(2+) site. Residue Tyr-12 coordinates a carbohydrate. 3 residues coordinate Mn(2+): Asp-19, His-24, and Ser-34. An a carbohydrate-binding site is contributed by 99–100 (LY). Residue Asp-208 participates in Ca(2+) binding. Residue Arg-228 participates in a carbohydrate binding.

It belongs to the leguminous lectin family. Homotetramer. The beta and gamma chains are produced by partial proteolytic processing of the lectin alpha chain by an asparaginyl endopeptidase. Mixture of 60% alpha lectin and 40% of its beta and gamma proteolytic fragments.

In terms of biological role, D-mannose/D-glucose-binding lectin. Has anti-inflammatory activity in rats. Induces histamine release in mast cells from rat. Induces lymphocyte proliferation and IFNG production. Shows toxicity against the aquatic snail B.glabrata at concentrations higher than 50 ug/ml. This chain is Lectin alpha chain, found in Dioclea grandiflora (Mucana).